A 550-amino-acid polypeptide reads, in one-letter code: Protein UshA (550 aa).

The N-terminal stretch at Met1–Ala25 is a signal peptide. Zn(2+) is bound by residues Asp41, His43, Asp84, Asn116, His217, His252, and Gln254. Residues Cys258 and Cys275 are joined by a disulfide bond. Residues Phe429 and Phe498–Asp504 each bind substrate.

It belongs to the 5'-nucleotidase family. As to quaternary structure, monomer. The cofactor is Zn(2+).

It localises to the periplasm. It carries out the reaction UDP-sugar + H2O = UMP + alpha-D-aldose 1-phosphate.. The enzyme catalyses a ribonucleoside 5'-phosphate + H2O = a ribonucleoside + phosphate. Functionally, degradation of external UDP-glucose to uridine monophosphate and glucose-1-phosphate, which can then be used by the cell. The polypeptide is Protein UshA (ushA) (Salmonella pullorum).